The chain runs to 293 residues: Beta-porphyranase B (293 aa).

An N-terminal signal peptide occupies residues 1 to 21 (MKLSNQFLITITLLITSITFA). The GH16 domain occupies 38–291 (QEWKLIENMS…WVRSWQLVDS (254 aa)). 5 residues coordinate substrate: Trp-67, Arg-70, Glu-156, Glu-161, and Glu-256. Glu-156 functions as the Nucleophile in the catalytic mechanism. Glu-161 functions as the Proton donor in the catalytic mechanism.

This sequence belongs to the glycosyl hydrolase 16 family.

It is found in the periplasm. The enzyme catalyses Hydrolysis of beta-D-galactopyranose-(1-&gt;4)-alpha-L-galactopyranose-6-sulfate linkages in porphyran.. In terms of biological role, cleaves the sulfated polysaccharide porphyran at the (1-&gt;4) linkages between beta-D-galactopyranose and alpha-L-galactopyranose-6-sulfate, forming mostly the disaccharide alpha-L-galactopyranose-6-sulfate-(1-&gt;3)-beta-D-galactose. Some longer oligosaccharides of even number of residues are also observed. Inactive on the non-sulfated agarose portion of the porphyran backbone. In contrast to PorA, tolerates the presence of 3-6-anhydro-L-galactose in subsite -2. This is Beta-porphyranase B (porB) from Zobellia galactanivorans (strain DSM 12802 / CCUG 47099 / CIP 106680 / NCIMB 13871 / Dsij).